We begin with the raw amino-acid sequence, 247 residues long: Coproheme decarboxylase (247 aa).

Fe-coproporphyrin III is bound by residues arginine 129, 143–147 (YPMDK), histidine 170, glutamine 183, and serine 221. Tyrosine 143 is a catalytic residue.

It belongs to the ChdC family. Type 1 subfamily. It depends on Fe-coproporphyrin III as a cofactor.

It carries out the reaction Fe-coproporphyrin III + 2 H2O2 + 2 H(+) = heme b + 2 CO2 + 4 H2O. The catalysed reaction is Fe-coproporphyrin III + H2O2 + H(+) = harderoheme III + CO2 + 2 H2O. It catalyses the reaction harderoheme III + H2O2 + H(+) = heme b + CO2 + 2 H2O. It participates in porphyrin-containing compound metabolism; protoheme biosynthesis. In terms of biological role, involved in coproporphyrin-dependent heme b biosynthesis. Catalyzes the decarboxylation of Fe-coproporphyrin III (coproheme) to heme b (protoheme IX), the last step of the pathway. The reaction occurs in a stepwise manner with a three-propionate intermediate. This chain is Coproheme decarboxylase, found in Bacillus cytotoxicus (strain DSM 22905 / CIP 110041 / 391-98 / NVH 391-98).